Reading from the N-terminus, the 292-residue chain is Hydroxysqualene synthase (292 aa).

Belongs to the phytoene/squalene synthase family. HpnC subfamily.

It catalyses the reaction presqualene diphosphate + H2O = hydroxysqualene + diphosphate. Its pathway is secondary metabolite biosynthesis; hopanoid biosynthesis. Involved in the biosynthesis of the hopanoid precursor squalene (SQ) from farnesyl diphosphate (FPP). Catalyzes the second step, the conversion of presqualene diphosphate (PSPP) to hydroxysqualene (HSQ). The sequence is that of Hydroxysqualene synthase from Sinorhizobium fredii (strain NBRC 101917 / NGR234).